We begin with the raw amino-acid sequence, 318 residues long: Deoxyhypusine hydroxylase (318 aa).

The Fe cation site is built by H65, E66, H98, and E99. 4 HEAT-like PBS-type repeats span residues 96–122, 194–220, 225–251, and 258–284; these read VRHEAAEALGALGFTESLPVLEKYYKE, YRYRVMFRLRNIGNEEAVLALTDGFKD, FRHEIAFVFGQMIAPASVPALIKVLEN, and VRHEAAEALGGIANDECLPVLKKFSKD. The Fe cation site is built by H227, E228, H260, and E261.

Belongs to the deoxyhypusine hydroxylase family. Fe(2+) is required as a cofactor.

The protein resides in the cytoplasm. It localises to the nucleus. It carries out the reaction [eIF5A protein]-deoxyhypusine + AH2 + O2 = [eIF5A protein]-hypusine + A + H2O. It functions in the pathway protein modification; eIF5A hypusination. Functionally, catalyzes the hydroxylation of the N(6)-(4-aminobutyl)-L-lysine intermediate to form hypusine, an essential post-translational modification only found in mature eIF-5A factor. This Schizosaccharomyces pombe (strain 972 / ATCC 24843) (Fission yeast) protein is Deoxyhypusine hydroxylase (lia1).